Here is a 109-residue protein sequence, read N- to C-terminus: Small ribosomal subunit protein uS17 (109 aa).

It belongs to the universal ribosomal protein uS17 family. Part of the 30S ribosomal subunit.

Its function is as follows. One of the primary rRNA binding proteins, it binds specifically to the 5'-end of 16S ribosomal RNA. The chain is Small ribosomal subunit protein uS17 from Thermoplasma volcanium (strain ATCC 51530 / DSM 4299 / JCM 9571 / NBRC 15438 / GSS1).